The chain runs to 1074 residues: MDDDDDSCLLDLIGDPQALNYFLHGPSSKSGSDDVTNAGYSAANSNSIFANSTNADPKSALKGVSDQLGEGPSDGLPLASSLQFLEDELESSPLPDLSEDQPFDILQKSLQEANITEQTLAEEAYLDASIGSSQQFAQAQLHPSSSASFTQASNVSNYSGQTLQPIGVTHVPVGASFASNTVGVQHGFMQHVGISVPSQHLPNSSQISGSGQIQLIGSFGNQPSMMTINNLDGSQIILKGSGQQAPSNVSGGLLVHRQTPNGNSLFGNSTSSPVAQPVTVPFNSTNFQASLPVHNIIIQRGLAPNSNKVPINIQPKPVQMGQQSAYNVNNLGIQQHHAQQGISFAPTSSPQGSVVGPHMSVNIVNQQNTRKPVTSQAVSGTGGSIVIHSPMGQPHTPQSQFLIPTSLSVSSNSVHHVQAINGQLLQTQPSQLISGQVASEHVMLNRNSSNMLRTNQPYSGQMLNNQNTAVQLVSGQTFATSGSPVIVNHASPQIVGGQMPLQQASPTVLHLSPGQSSVSQGRPGFATMPAVSGMAGPARFPAVSSASTAHPTLGPTVQSGAPGSNFTGDQLTQANRTPAPVSVSHRLPVSASKSPSTLSNTPGTQQQFFCQAQKKCLNQTSPIPTSKTTDGLRPSQIPGLLSTALPGQDSGSKIMPATLGATQAQPESSVGSSPSQTAVQVDSHPGQKRPAAKQLTKGAFILQQLQRDQAHAVTPDKSQFRSLNDTVQRLLSYHVCQGSMPTEEDLRQVDNEFEEVATQLLKRTQAMLNKYRFLLLEDAMRINPSAEMVMIDRMFNQEERASLSRDKRLALVDPEGFQADFCCSFKLDEAVPETPLDRSDQHRSKTSSLHQVPRAQSRDRAKPGMAEATNHDQFHLVPNHIVVSAEGNISKKSEGHSRTLKFDRGVLGQYRGPPEDKGGRRDPAKVSRCSPGPEGHRKSLPRPDHGSESKLPGVLASSHMEMPCLDSFQDKALRNSPKNEVLHTDIMKGSGEPQPDLQLTKSLEKTFKNILELKNSGRPPSDPTASGAADLDFPSFSPMASQENCLEKFIPDHSEGVVETDSILEAAVNSILEC.

4 disordered regions span residues 542-603 (AVSS…NTPG), 620-689 (TSPI…GQKR), 834-874 (TPLD…HDQF), and 887-952 (GNIS…SKLP). 4 stretches are compositionally biased toward polar residues: residues 544–576 (SSAS…QANR), 591–603 (ASKS…NTPG), 620–629 (TSPIPTSKTT), and 660–680 (GATQ…TAVQ). Ser-621 is modified (phosphoserine). 3 stretches are compositionally biased toward basic and acidic residues: residues 889–904 (ISKK…KFDR), 913–925 (PPED…DPAK), and 934–948 (EGHR…HGSE). The residue at position 976 (Ser-976) is a Phosphoserine.

Component of the multiprotein chromatin-remodeling complexes SWI/SNF: SWI/SNF-A (BAF), SWI/SNF-B (PBAF) and related complexes. The canonical complex contains a catalytic subunit (either SMARCA4/BRG1/BAF190A or SMARCA2/BRM/BAF190B) and at least SMARCE1, ACTL6A/BAF53, SMARCC1/BAF155, SMARCC2/BAF170, and SMARCB1/SNF5/BAF47. Other subunits specific to each of the complexes may also be present permitting several possible combinations developmentally and tissue specific. Component of the SWI/SNF (GBAF) subcomplex, which includes at least BICRA or BICRAL (mutually exclusive), BRD9, SS18, the core BAF subunits, SMARCA2/BRM, SMARCA4/BRG1/BAF190A, ACTL6A/BAF53, SMARCC1/BAF155, and SMARCD1/BAF60A.

In terms of biological role, component of SWI/SNF chromatin remodeling subcomplex GBAF that carries out key enzymatic activities, changing chromatin structure by altering DNA-histone contacts within a nucleosome in an ATP-dependent manner. The sequence is that of BRD4-interacting chromatin-remodeling complex-associated protein-like from Mus musculus (Mouse).